The following is a 374-amino-acid chain: NADH-quinone oxidoreductase subunit D 1 (374 aa).

The protein belongs to the complex I 49 kDa subunit family. In terms of assembly, NDH-1 is composed of 14 different subunits. Subunits NuoB, C, D, E, F, and G constitute the peripheral sector of the complex.

It localises to the cell membrane. It carries out the reaction a quinone + NADH + 5 H(+)(in) = a quinol + NAD(+) + 4 H(+)(out). Functionally, NDH-1 shuttles electrons from NADH, via FMN and iron-sulfur (Fe-S) centers, to quinones in the respiratory chain. The immediate electron acceptor for the enzyme in this species is believed to be ubiquinone. Couples the redox reaction to proton translocation (for every two electrons transferred, four hydrogen ions are translocated across the cytoplasmic membrane), and thus conserves the redox energy in a proton gradient. This is NADH-quinone oxidoreductase subunit D 1 from Roseiflexus sp. (strain RS-1).